Reading from the N-terminus, the 206-residue chain is Type III pantothenate kinase (206 aa).

D5–K12 lines the ATP pocket. Substrate is bound by residues Y67 and G72 to R75. The active-site Proton acceptor is the D74. D89 is a binding site for K(+). Residue S92 participates in ATP binding. T144 lines the substrate pocket.

This sequence belongs to the type III pantothenate kinase family. In terms of assembly, homodimer. Requires NH4(+) as cofactor. K(+) serves as cofactor.

The protein resides in the cytoplasm. It carries out the reaction (R)-pantothenate + ATP = (R)-4'-phosphopantothenate + ADP + H(+). It participates in cofactor biosynthesis; coenzyme A biosynthesis; CoA from (R)-pantothenate: step 1/5. Catalyzes the phosphorylation of pantothenate (Pan), the first step in CoA biosynthesis. This Campylobacter hominis (strain ATCC BAA-381 / DSM 21671 / CCUG 45161 / LMG 19568 / NCTC 13146 / CH001A) protein is Type III pantothenate kinase.